The chain runs to 980 residues: Thrombospondin-4 (980 aa).

The first 42 residues, Met-1–Ala-42, serve as a signal peptide directing secretion. In terms of domain architecture, Laminin G-like spans Gln-43–Gly-210. The 40-residue stretch at Pro-304–Ser-343 folds into the EGF-like 1 domain. 21 disulfide bridges follow: Cys-308–Cys-319, Cys-313–Cys-328, Cys-331–Cys-342, Cys-348–Cys-359, Cys-353–Cys-368, Cys-371–Cys-395, Cys-401–Cys-412, Cys-406–Cys-421, Cys-424–Cys-436, Cys-442–Cys-456, Cys-450–Cys-466, Cys-468–Cys-480, Cys-496–Cys-501, Cys-506–Cys-526, Cys-542–Cys-562, Cys-565–Cys-585, Cys-601–Cys-621, Cys-624–Cys-644, Cys-662–Cys-682, Cys-702–Cys-722, and Cys-738–Cys-959. Residues Asp-344–Gln-381 form the EGF-like 2; calcium-binding domain. Positions Asp-397 to Arg-434 constitute an EGF-like 3; calcium-binding domain. The 44-residue stretch at Thr-438 to Gly-481 folds into the EGF-like 4 domain. 8 TSP type-3 repeats span residues Lys-482–Gln-514, Glu-515–Gln-550, Arg-551–Gln-573, Lys-574–Gln-609, Gln-610–Gln-632, Ser-633–Gln-670, Leu-671–Gln-710, and Glu-711–Leu-746. The interval Asn-596 to Met-691 is disordered. Basic and acidic residues predominate over residues Pro-605–Asp-615. Asn-631 carries N-linked (GlcNAc...) asparagine glycosylation. Residues Thr-659–Leu-671 are compositionally biased toward polar residues. Residues Gly-679–Gly-690 show a composition bias toward acidic residues. In terms of domain architecture, TSP C-terminal spans Arg-750 to Pro-964. Asn-960 carries an N-linked (GlcNAc...) asparagine glycan.

It belongs to the thrombospondin family. In terms of assembly, homopentamer; disulfide-linked. Interacts with PTBP3. Interacts (via EGF-like 3; calcium-binding domain) with ATF6 and facilitates its processing, activation and nuclear translocation. Interacts with NOTCH1. Mainly expressed in astrocytes, and in ressponse to peripheral nerve injury, significantly up-regulated in the dorsal spinal cord (at protein level).

The protein resides in the endoplasmic reticulum. Its subcellular location is the sarcoplasmic reticulum. It is found in the secreted. The protein localises to the extracellular space. It localises to the extracellular matrix. In terms of biological role, adhesive glycoprotein that mediates cell-to-cell and cell-to-matrix interactions and is involved in various processes including cellular proliferation, migration, adhesion and attachment, inflammatory response to CNS injury, regulation of vascular inflammation and adaptive responses of the heart to pressure overload and in myocardial function and remodeling. Binds to structural extracellular matrix (ECM) proteins and modulates the ECM in response to tissue damage, contributing to cardioprotective and adaptive ECM remodeling. Plays a role in ER stress response, via its interaction with the activating transcription factor 6 alpha (ATF6) which produces adaptive ER stress response factors and protects myocardium from pressure overload. May contribute to spinal presynaptic hypersensitivity and neuropathic pain states after peripheral nerve injury. May play a role in regulating protective astrogenesis from the subventricular zone (SVZ) niche after injury in a NOTCH1-dependent manner. In Rattus norvegicus (Rat), this protein is Thrombospondin-4 (Thbs4).